A 700-amino-acid chain; its full sequence is Elongation factor G 1 (700 aa).

Positions Glu-8–Ala-290 constitute a tr-type G domain. GTP contacts are provided by residues Ala-17–Thr-24, Asp-88–His-92, and Asn-142–Asp-145.

The protein belongs to the TRAFAC class translation factor GTPase superfamily. Classic translation factor GTPase family. EF-G/EF-2 subfamily.

The protein localises to the cytoplasm. Functionally, catalyzes the GTP-dependent ribosomal translocation step during translation elongation. During this step, the ribosome changes from the pre-translocational (PRE) to the post-translocational (POST) state as the newly formed A-site-bound peptidyl-tRNA and P-site-bound deacylated tRNA move to the P and E sites, respectively. Catalyzes the coordinated movement of the two tRNA molecules, the mRNA and conformational changes in the ribosome. The sequence is that of Elongation factor G 1 from Bordetella bronchiseptica (strain ATCC BAA-588 / NCTC 13252 / RB50) (Alcaligenes bronchisepticus).